The primary structure comprises 144 residues: Bombinins BLP-7/GH-2 (144 aa).

The N-terminal stretch at 1-18 (MNFKYIVAVSFLIASTYA) is a signal peptide. Positions 19–43 (RSVKNDEQSLSQRDVLEEESLREIR) are excised as a propeptide. Asn-70 bears the Asparagine amide mark. The propeptide occupies 74–123 (TAEEHEVMKRLEAVMRDLDSLDYPEEASEMETRSFNQEEIANLFTKKEKR). Ile-143 carries the isoleucine amide modification.

The protein belongs to the bombinin family. As to expression, expressed by the skin glands.

The protein localises to the secreted. Its function is as follows. Antimicrobial peptide with activity against Gram-positive and -negative bacteria and fungi. Shows activity against P.acnes (MIC=5 uM), E.coli (MIC=5-6.3 uM), S.aureus (MIC=5-6.3 uM), M.luteus, S.cerevisiae and C.albicans (MIC=10-12.5 uM). Also reduces the production of interleukin (IL)-8 and granulocyte-macrophage colony stimulating factor (CSF2) in normal human epidermal keratinocytes (NHEKs). Shows anticancer activity against three human hepatoma cell lines. In vivo, using the rat ear edema model, suppress P.acnes-induced skin inflammation, significantly reducing the ear thickness. Shows weak hemolytic activity against human erythrocytes. In terms of biological role, shows weak antimicrobial activity but high hemolytic activity. The polypeptide is Bombinins BLP-7/GH-2 (Bombina orientalis (Oriental fire-bellied toad)).